Here is a 277-residue protein sequence, read N- to C-terminus: Tryptophan synthase alpha chain (277 aa).

Catalysis depends on proton acceptor residues glutamate 51 and glutamate 62.

The protein belongs to the TrpA family. In terms of assembly, tetramer of two alpha and two beta chains.

The catalysed reaction is (1S,2R)-1-C-(indol-3-yl)glycerol 3-phosphate + L-serine = D-glyceraldehyde 3-phosphate + L-tryptophan + H2O. Its pathway is amino-acid biosynthesis; L-tryptophan biosynthesis; L-tryptophan from chorismate: step 5/5. Its function is as follows. The alpha subunit is responsible for the aldol cleavage of indoleglycerol phosphate to indole and glyceraldehyde 3-phosphate. The protein is Tryptophan synthase alpha chain of Phenylobacterium zucineum (strain HLK1).